A 386-amino-acid chain; its full sequence is Succinate--CoA ligase [ADP-forming] subunit beta (386 aa).

Positions 9–244 constitute an ATP-grasp domain; that stretch reads KAVLRSYGVS…LEEEDSKEIE (236 aa). ATP contacts are provided by residues Lys-46, 53–55, Glu-99, Cys-102, and Glu-107; that span reads GRG. Mg(2+) is bound by residues Asn-199 and Asp-213. Substrate is bound by residues Asn-264 and 321 to 323; that span reads GIM.

It belongs to the succinate/malate CoA ligase beta subunit family. In terms of assembly, heterotetramer of two alpha and two beta subunits. It depends on Mg(2+) as a cofactor.

It carries out the reaction succinate + ATP + CoA = succinyl-CoA + ADP + phosphate. The enzyme catalyses GTP + succinate + CoA = succinyl-CoA + GDP + phosphate. It participates in carbohydrate metabolism; tricarboxylic acid cycle; succinate from succinyl-CoA (ligase route): step 1/1. Succinyl-CoA synthetase functions in the citric acid cycle (TCA), coupling the hydrolysis of succinyl-CoA to the synthesis of either ATP or GTP and thus represents the only step of substrate-level phosphorylation in the TCA. The beta subunit provides nucleotide specificity of the enzyme and binds the substrate succinate, while the binding sites for coenzyme A and phosphate are found in the alpha subunit. The sequence is that of Succinate--CoA ligase [ADP-forming] subunit beta from Bacillus mycoides (strain KBAB4) (Bacillus weihenstephanensis).